We begin with the raw amino-acid sequence, 196 residues long: Putative NADH dehydrogenase/NAD(P)H nitroreductase XOO4023 (196 aa).

The protein belongs to the nitroreductase family. HadB/RutE subfamily. The cofactor is FMN.

The protein is Putative NADH dehydrogenase/NAD(P)H nitroreductase XOO4023 of Xanthomonas oryzae pv. oryzae (strain MAFF 311018).